The following is a 403-amino-acid chain: Argininosuccinate synthase (403 aa).

Residues 13–21 (AYSGGLDTS) and Ala40 contribute to the ATP site. L-citrulline is bound by residues Tyr91 and Ser96. An ATP-binding site is contributed by Gly121. Residues Thr123, Asn127, and Asp128 each coordinate L-aspartate. Asn127 is an L-citrulline binding site. L-citrulline contacts are provided by Arg131, Ser180, Ser189, Glu265, and Tyr277.

Belongs to the argininosuccinate synthase family. Type 1 subfamily. Homotetramer.

It localises to the cytoplasm. It carries out the reaction L-citrulline + L-aspartate + ATP = 2-(N(omega)-L-arginino)succinate + AMP + diphosphate + H(+). It functions in the pathway amino-acid biosynthesis; L-arginine biosynthesis; L-arginine from L-ornithine and carbamoyl phosphate: step 2/3. This chain is Argininosuccinate synthase, found in Leptospira borgpetersenii serovar Hardjo-bovis (strain JB197).